Reading from the N-terminus, the 788-residue chain is Cyclin-F (788 aa).

The short motif at 20–28 (KRRIRRRPR) is the Nuclear localization signal 1 element. The 48-residue stretch at 29-76 (NLTILNLPEDALFHILKWLSVGDILAVRAVHSHLKYLVDNHASVWACA) folds into the F-box domain. A Cyclin N-terminal domain is found at 291–405 (HAVNKQRVFS…EVVSALDGKI (115 aa)). 4 short sequence motifs (d box) span residues 310 to 313 (RYIL), 343 to 346 (RRRL), 349 to 352 (RYRL), and 351 to 354 (RLQL). Disordered regions lie at residues 566–585 (SARRTKRKRENSLQEDRGSF) and 700–788 (TSGY…FLKL). The Nuclear localization signal 2 motif lies at 568-574 (RRTKRKR). The tract at residues 582-766 (RGSFVTTPTA…ESCAPQQQVK (185 aa)) is PEST. Polar residues-rich tracts occupy residues 700 to 716 (TSGYSSVNSASPTDSGR) and 723 to 738 (RSTSELPTGSSLNTQP). Positions 767–770 (RKNL) match the D box 5 motif.

Belongs to the cyclin family. Cyclin AB subfamily. Component of the SCF(CCNF) complex consisting of CUL1, RBX1, SKP1 and CCNF. Interacts with SKP1. Interacts with CUL1. Interacts with CCNB1; interaction is required for nuclear localization of CCNB1. Interacts with CCP110; this interaction leads to CCP110 ubiquitination and degradation via the proteasome pathway. Interacts (via the Cyclin N-terminal domain) with MYBL2/BMYB. Interacts with FZR1/CDH1 (via N-terminus). Interacts with RRM2 (via Cy motif and when phosphorylated at 'Thr-33'); the interaction occurs exclusively in G2 and early M. Interacts with CDC6 (via Cy motif); the interaction takes place during G2 and M phase. In terms of processing, degraded when the spindle assembly checkpoint is activated during the G2-M transition. Degradation is not dependent on the proteasome or ubiquitin and depends on the C-terminal PEST sequence. Post-translationally, phosphorylated just before cells enter into mitosis. Ubiquitinated by the anaphase-promoting complex (APC/C); leading to its degradation by the proteasome.

The protein resides in the nucleus. It localises to the cytoplasm. It is found in the perinuclear region. The protein localises to the cytoskeleton. Its subcellular location is the microtubule organizing center. The protein resides in the centrosome. It localises to the centriole. Its function is as follows. Substrate recognition component of a SCF (SKP1-CUL1-F-box protein) E3 ubiquitin-protein ligase complex which mediates the ubiquitination and subsequent proteasomal degradation of target proteins. The SCF(CCNF) E3 ubiquitin-protein ligase complex is an integral component of the ubiquitin proteasome system (UPS) and links proteasome degradation to the cell cycle. Mediates the substrate recognition and the proteasomal degradation of various target proteins involved in the regulation of cell cycle progression and in the maintenance of genome stability. Mediates the ubiquitination and subsequent proteasomal degradation of CP110 during G2 phase, thereby acting as an inhibitor of centrosome reduplication. In G2, mediates the ubiquitination and proteasomal degradation of CDC6, thereby suppressing DNA re-replication and preventing genome instability. Involved in the ubiquitination and degradation of the substrate adapter CDH1 of the anaphase-promoting complex (APC/C), thereby acting as an antagonist of APC/C in regulating G1 progression and S phase entry. May play a role in the G2 cell cycle checkpoint control after DNA damage, possibly by promoting the ubiquitination of MYBL2/BMYB. The chain is Cyclin-F (CCNF) from Bos taurus (Bovine).